The following is a 289-amino-acid chain: uncharacterized protein (289 aa).

Residues 268–289 form a disordered region; sequence SDDGYETQWSDGPYSIPSGLSD.

This is an uncharacterized protein from Zea mays (Maize).